A 472-amino-acid polypeptide reads, in one-letter code: Meiotic spindle formation protein mei-1 (472 aa).

A disordered region spans residues 83–161; it reads HEAMTRQSGS…TQGILPQNSA (79 aa). Ser-92 carries the phosphoserine; by mbk-2 modification. 2 stretches are compositionally biased toward polar residues: residues 134 to 143 and 150 to 161; these read KSTSSMSTNP and NPTQGILPQNSA. Residues 233–240 and 351–352 contribute to the ATP site; these read GPPGTGKT and RR.

Belongs to the AAA ATPase family. Katanin p60 subunit A1 subfamily. Homohexamer; ATP hydrolysis initiates a cycle between an open spiral and a closed ring conformation which is probably involved in pulling tubulin dimers out from microtubules. Interacts with mei-2, which may serve as a targeting subunit. Interacts with mel-26, which targets mei-1 for ubiquitin mediated proteolysis. Interacts with phosphatase pph-4.1. In terms of processing, phosphorylated. Phosphorylation by mbk-2 is required for its rapid degradation following meiosis II. Likely dephosphorylated by the PP4 complex composed of catalytic subunit pph-4.1 and regulatory subunit ppfr-1. Post-translationally, polyubiquitination targets the protein for rapid degradation via the ubiquitin system at the end of meiosis. The BTB domain protein mel-26 may serve to specifically target mei-1 for ubiquitination by cul-3 containing complexes. The cul-3 protein is in turn regulated by neddylation by ned-8.

Its subcellular location is the cytoplasm. It is found in the cytoskeleton. The protein localises to the spindle pole. It localises to the chromosome. It carries out the reaction n ATP + n H2O + a microtubule = n ADP + n phosphate + (n+1) alpha/beta tubulin heterodimers.. ATPase activity is stimulated by microtubules, which promote homooligomerization. ATP-dependent microtubule severing is stimulated by interaction with mei-2. In terms of biological role, catalytic subunit of a complex which severs microtubules in an ATP-dependent manner. Microtubule severing may promote rapid reorganization of cellular microtubule arrays. Required specifically for meiotic spindle formation in the female germline; the presence of this protein is inimical to the formation of mitotic spindles. In body wall muscles, regulates organization of myosin thick filaments. The chain is Meiotic spindle formation protein mei-1 from Caenorhabditis elegans.